The chain runs to 447 residues: UPF0210 protein LEUM_1180 (447 aa).

Belongs to the UPF0210 family. In terms of assembly, homodimer.

The polypeptide is UPF0210 protein LEUM_1180 (Leuconostoc mesenteroides subsp. mesenteroides (strain ATCC 8293 / DSM 20343 / BCRC 11652 / CCM 1803 / JCM 6124 / NCDO 523 / NBRC 100496 / NCIMB 8023 / NCTC 12954 / NRRL B-1118 / 37Y)).